A 256-amino-acid polypeptide reads, in one-letter code: 3-deoxy-manno-octulosonate cytidylyltransferase (256 aa).

Belongs to the KdsB family.

The protein localises to the cytoplasm. It carries out the reaction 3-deoxy-alpha-D-manno-oct-2-ulosonate + CTP = CMP-3-deoxy-beta-D-manno-octulosonate + diphosphate. It functions in the pathway nucleotide-sugar biosynthesis; CMP-3-deoxy-D-manno-octulosonate biosynthesis; CMP-3-deoxy-D-manno-octulosonate from 3-deoxy-D-manno-octulosonate and CTP: step 1/1. It participates in bacterial outer membrane biogenesis; lipopolysaccharide biosynthesis. Activates KDO (a required 8-carbon sugar) for incorporation into bacterial lipopolysaccharide in Gram-negative bacteria. The polypeptide is 3-deoxy-manno-octulosonate cytidylyltransferase (Histophilus somni (strain 129Pt) (Haemophilus somnus)).